The chain runs to 447 residues: 2-oxoadipate dioxygenase/decarboxylase (447 aa).

The 2-oxoadipate site is built by histidine 68, arginine 72, and histidine 224. Residue histidine 68 coordinates Fe(2+). Positions 224 and 290 each coordinate Fe(2+). Residue valine 391 participates in 2-oxoadipate binding.

It belongs to the 2-oxoadipate dioxygenase/decarboxylase family. Fe(2+) serves as cofactor.

It carries out the reaction 2-oxoadipate + O2 = (R)-2-hydroxyglutarate + CO2. Functionally, catalyzes the decarboxylation and hydroxylation of 2-oxoadipate (2OA) to form D-2-hydroxyglutarate (D-2-HGA). The protein is 2-oxoadipate dioxygenase/decarboxylase of Shigella flexneri.